A 463-amino-acid polypeptide reads, in one-letter code: Probable mannan endo-1,4-beta-mannosidase F (463 aa).

Positions 1–18 (MRSLSSIALLSVVGAASA) are cleaved as a signal peptide. The CBM1 domain maps to 19–54 (QAGPWAQCGGKSFSGSSECASGWKCQELNEWFSQCV). The segment at 57–78 (AESTTPTVSSTPTPTDAPSVSI) is disordered. Positions 59 to 77 (STTPTVSSTPTPTDAPSVS) are enriched in low complexity. The tract at residues 75–118 (SVSITASATTGINKSISVSSASKSTPLPSSSSASPSPRPTGSGS) is ser-rich linker. An N-linked (GlcNAc...) asparagine glycan is attached at asparagine 87. Residues 93 to 118 (SSASKSTPLPSSSSASPSPRPTGSGS) show a composition bias toward low complexity. The disordered stretch occupies residues 93-121 (SSASKSTPLPSSSSASPSPRPTGSGSFAK). Positions 119 to 463 (FAKADGLQFS…MDHMENVNKN (345 aa)) are catalytic. Positions 171 and 285 each coordinate substrate. Glutamate 286 serves as the catalytic Proton donor. Position 361 (tyrosine 361) interacts with substrate. Glutamate 395 serves as the catalytic Nucleophile. Substrate is bound at residue tryptophan 424.

The protein belongs to the glycosyl hydrolase 5 (cellulase A) family.

It is found in the secreted. It carries out the reaction Random hydrolysis of (1-&gt;4)-beta-D-mannosidic linkages in mannans, galactomannans and glucomannans.. Its function is as follows. Endo-1,4-mannanase, a crucial enzyme for depolymerization of seed galactomannans and wood galactoglucomannans. This is Probable mannan endo-1,4-beta-mannosidase F (manF) from Aspergillus flavus (strain ATCC 200026 / FGSC A1120 / IAM 13836 / NRRL 3357 / JCM 12722 / SRRC 167).